The sequence spans 272 residues: METYAVFGNPIAHSKSPFIHQQFAQQLNIEHPYGRVLAPINDFINTLNAFFSAGGKGANVTVPFKEEAFARADELTERAALAGAVNTLKRLEDGRLLGDNTDGIGLLSDLERLSFIRPGLRILLIGAGGASRGVLLPLLSLDCAVTITNRTVSRAEELAKLFAHTGSIHALGMDELEGHEFDLIINATSSGISGDIPAIPSSLIHPGIYCYDMFYQKGKTPFLAWCEQRGSKRTADGLGMLVAQAAHAFLLWHGVLPDVEPVIKLLQQELSA.

Residues 14-16 (SKS) and T61 each bind shikimate. Catalysis depends on K65, which acts as the Proton acceptor. E77 is an NADP(+) binding site. 2 residues coordinate shikimate: N86 and D102. NADP(+) is bound by residues 126-130 (GAGGA), 149-154 (NRTVSR), and M213. Y215 contributes to the shikimate binding site. Residue G237 coordinates NADP(+).

This sequence belongs to the shikimate dehydrogenase family. Homodimer.

The catalysed reaction is shikimate + NADP(+) = 3-dehydroshikimate + NADPH + H(+). Its pathway is metabolic intermediate biosynthesis; chorismate biosynthesis; chorismate from D-erythrose 4-phosphate and phosphoenolpyruvate: step 4/7. Involved in the biosynthesis of the chorismate, which leads to the biosynthesis of aromatic amino acids. Catalyzes the reversible NADPH linked reduction of 3-dehydroshikimate (DHSA) to yield shikimate (SA). This chain is Shikimate dehydrogenase (NADP(+)), found in Escherichia coli O6:K15:H31 (strain 536 / UPEC).